The primary structure comprises 53 residues: Alpha-1-antiproteinase 1 (53 aa).

The segment at 1–28 (EDLQGDAVPETSATKDDNEXPEMIPMSL) is disordered.

The protein belongs to the serpin family. Post-translationally, N-glycosylated; contains biantennary glycans. In terms of tissue distribution, plasma.

Its subcellular location is the secreted. The chain is Alpha-1-antiproteinase 1 from Equus caballus (Horse).